The sequence spans 379 residues: Homoserine O-succinyltransferase (379 aa).

The AB hydrolase-1 domain maps to 48–357 (NAVLICHALS…SAHGHDAFLM (310 aa)). The Nucleophile role is filled by S154. R224 lines the substrate pocket. Active-site residues include D319 and H352. Residue D353 coordinates substrate.

Belongs to the AB hydrolase superfamily. MetX family. In terms of assembly, homodimer.

It is found in the cytoplasm. The enzyme catalyses L-homoserine + succinyl-CoA = O-succinyl-L-homoserine + CoA. It participates in amino-acid biosynthesis; L-methionine biosynthesis via de novo pathway; O-succinyl-L-homoserine from L-homoserine: step 1/1. Its activity is regulated as follows. Activity increases in the presence of MetW. Functionally, transfers a succinyl group from succinyl-CoA to L-homoserine, forming succinyl-L-homoserine. The protein is Homoserine O-succinyltransferase of Neisseria gonorrhoeae.